The sequence spans 89 residues: Small ribosomal subunit protein uS15 (89 aa).

Belongs to the universal ribosomal protein uS15 family. As to quaternary structure, part of the 30S ribosomal subunit. Forms a bridge to the 50S subunit in the 70S ribosome, contacting the 23S rRNA.

In terms of biological role, one of the primary rRNA binding proteins, it binds directly to 16S rRNA where it helps nucleate assembly of the platform of the 30S subunit by binding and bridging several RNA helices of the 16S rRNA. Forms an intersubunit bridge (bridge B4) with the 23S rRNA of the 50S subunit in the ribosome. The chain is Small ribosomal subunit protein uS15 from Bdellovibrio bacteriovorus (strain ATCC 15356 / DSM 50701 / NCIMB 9529 / HD100).